The primary structure comprises 1166 residues: MQIEERIVEGHLLAARTTPGNTRRISFAKITEPLEVPQLLSLQTDSFDWLVGNDKWNAAVERRRSEGEDVSSKSGLQEIFEEISPIEDFSETMSLSFENPVFYDPKYTVDECKEKDFTYSAPLYVSAEFTNNDTGEIKGQTVFMGDFPLMTDKGTFIINGTERVVVSQLVRSPGVYFERTADKTSDKDIYTAKLIPSRGAWLEFEIDKRDMVGVRLDRKRKQNVTVLLKALGWTNEQIREEFGEYESMMLTLEKDHTQGQDDALLDIYRKLRPGEPPTREAAQTLLNNYYFNPKRYDLAKVGRYKINKKLGLLEAFDQQTLTIDDVVAAIKYIVALHDGREQIEAPQGTLDISADDIDHFGNRRMRTVGELIQNQLRTGLARMERVVRERMTTQDVEAITPQSLINIRPVVAALKEFFGTSQLSQFMDQTNPIAGLTHKRRLSALGPGGLSRDRAGMEVRDVHPSHYGRMCPIETPEGPNIGLIGSLASYGRINPFGFVETPYRKVTKGKVTDQIDYLTADDEDRYVIAQANAALDDKSRFVEERVLVRQRDGEVSEVLADEVDYMDVSPRQMVSVATALIPFLEHDDANRALMGANMQRQAVPLIKSDSPLVGTGIEYRAAVDAGDVVVATAAGVVKEVSADVIETMNDDGTYSTYRLAKFKRSNQGTCINQRPLVSEGDRLEIGTPIADGPCTDEAEMALGTNLLVAFMPWQGHNYEDAIILSQRLVQEDILTSIHIEEHEVDARDTKLGPEEITRDIPNVSEEMLADLDERGIIRIGAEVTTGDVLVGKVTPKGETELTPEERLLRAIFGEKAREVRDTSMKVPHGESGTVIGVRVFDREDGDELPPGVNQLVRVYVAQKRKISVGDKLAGRHGNKGVIAKILPIEDMPFMEDGTPVDVVLNPLGVPRRMNIGQILELHLGWLAKQGWDLNLNDDKSGADWKQRLIKIHADKAEPGTKVATPVFDGAREDEITGLLGSTIPNRDGVRMIDNTGKASLFDGRSGEPFPEPVAVGYMYILKLHHLVDDKIHARSTGPYSMITQQPLGGKAQFGGQRFGEMEVWAMEAYGAAYALQELLTIKSDDVPGRVKVYEAIVKGENIPDSGIPESFKVLVKEMQSLCLNVEVLSQDGTAIEMRDAEEDVFRAAEELGIDLSRREPSSVEEV.

It belongs to the RNA polymerase beta chain family. In terms of assembly, the RNAP catalytic core consists of 2 alpha, 1 beta, 1 beta' and 1 omega subunit. When a sigma factor is associated with the core the holoenzyme is formed, which can initiate transcription.

The enzyme catalyses RNA(n) + a ribonucleoside 5'-triphosphate = RNA(n+1) + diphosphate. In terms of biological role, DNA-dependent RNA polymerase catalyzes the transcription of DNA into RNA using the four ribonucleoside triphosphates as substrates. This is DNA-directed RNA polymerase subunit beta from Nocardioides sp. (strain ATCC BAA-499 / JS614).